Here is a 322-residue protein sequence, read N- to C-terminus: CXXC-type zinc finger protein 5 (322 aa).

Positions 1-10 (MSSLGGGSQD) are enriched in gly residues. Residues 1–100 (MSSLGGGSQD…SGGGSMMGGE (100 aa)) form a disordered region. Low complexity-rich tracts occupy residues 11 to 20 (AGGSSSSSTN) and 28 to 52 (SGPKAGAADKSAVVAAATPASVADD). Phosphothreonine is present on threonine 53. Residues 87 to 97 (SSGGSGGGSMM) are compositionally biased toward gly residues. The CXXC-type zinc-finger motif lies at 256–297 (GKKKRKRCGMCAPCRRRINCEQCSSCRNRKTGHQICKFRKCE). The Nuclear localization signal signature appears at 257–262 (KKKRKR). 8 residues coordinate Zn(2+): cysteine 263, cysteine 266, cysteine 269, cysteine 275, cysteine 278, cysteine 281, cysteine 291, and cysteine 296.

As to quaternary structure, interacts with DVL1. Interacts with RBPJ.

It is found in the nucleus. The protein localises to the cytoplasm. Its function is as follows. May indirectly participate in activation of the NF-kappa-B and MAPK pathways. Acts as a mediator of BMP4-mediated modulation of canonical Wnt signaling activity in neural stem cells. Required for DNA damage-induced ATM phosphorylation, p53 activation and cell cycle arrest. Involved in myelopoiesis. Binds to the oxygen responsive element of COX4I2 and represses its transcription under hypoxia conditions (4% oxygen), as well as normoxia conditions (20% oxygen). May repress COX4I2 transactivation induced by CHCHD2 and RBPJ. Binds preferentially to DNA containing cytidine-phosphate-guanosine (CpG) dinucleotides over CpH (H=A, T, and C), hemimethylated-CpG and hemimethylated-hydroxymethyl-CpG. The sequence is that of CXXC-type zinc finger protein 5 (CXXC5) from Pongo abelii (Sumatran orangutan).